Consider the following 83-residue polypeptide: MASTPMGNEGEKKSSWPSQAAPSLRGGPASLSRSEEYLSQISAELMEEALCTACCHLNPVPIKKKQSQDQATQISKRAFFTKT.

Residues 1-33 (MASTPMGNEGEKKSSWPSQAAPSLRGGPASLSR) form a disordered region.

This chain is Putative protein T-ENOL, found in Homo sapiens (Human).